The primary structure comprises 542 residues: Chaperonin GroEL 3 (542 aa).

Residues 30–33, Lys51, 87–91, Gly415, and Asp494 contribute to the ATP site; these read TLGP and DGTTT. The disordered stretch occupies residues 523–542; that stretch reads KPKKKEPPMPAMPSDMGDYD.

The protein belongs to the chaperonin (HSP60) family. As to quaternary structure, forms a cylinder of 14 subunits composed of two heptameric rings stacked back-to-back. Interacts with the co-chaperonin GroES.

It is found in the cytoplasm. The catalysed reaction is ATP + H2O + a folded polypeptide = ADP + phosphate + an unfolded polypeptide.. Together with its co-chaperonin GroES, plays an essential role in assisting protein folding. The GroEL-GroES system forms a nano-cage that allows encapsulation of the non-native substrate proteins and provides a physical environment optimized to promote and accelerate protein folding. This Syntrophus aciditrophicus (strain SB) protein is Chaperonin GroEL 3.